The following is a 316-amino-acid chain: DNA-directed RNA polymerase subunit alpha (316 aa).

The segment at 1–233 (MCMSQFPIEF…HWFNPLQTLE (233 aa)) is alpha N-terminal domain (alpha-NTD). Residues 245–316 (MAQLSNMLIE…LHCQLKKYVD (72 aa)) are alpha C-terminal domain (alpha-CTD).

Belongs to the RNA polymerase alpha chain family. As to quaternary structure, in plastids the minimal PEP RNA polymerase catalytic core is composed of four subunits: alpha, beta, beta', and beta''. When a (nuclear-encoded) sigma factor is associated with the core the holoenzyme is formed, which can initiate transcription.

Its subcellular location is the plastid. The protein resides in the chloroplast. The catalysed reaction is RNA(n) + a ribonucleoside 5'-triphosphate = RNA(n+1) + diphosphate. Its function is as follows. DNA-dependent RNA polymerase catalyzes the transcription of DNA into RNA using the four ribonucleoside triphosphates as substrates. This chain is DNA-directed RNA polymerase subunit alpha, found in Cyanidioschyzon merolae (strain NIES-3377 / 10D) (Unicellular red alga).